A 776-amino-acid chain; its full sequence is MMTNGAKTLYDKVFEAHIVHQDESGSCLLYIDRHLVHEVTSPQAFEGLKTAGRPVRRTDCTLATVDHNIPTESRRHFRNTESFIKEADSRLQVQTLEQNVKDFHVPYLGMSDERQGIVHIIGPEQGFTLPGTTVVCGDSHTSTHGAFGALAFGIGTSEVEHVLATQTVIQSKSKNMRIHVEGSLSPGITSKDLILHIIGVIGTAGGTGCVIEFTGQAIQELTMEARMSMCNMAIEAGARAGMIQPDETTFEYLKGRPLAPTGAEWEKAVTYWKTLKTDEDAVFDISVTVKGADIRPTITWGTSPQDALPIDAAVPDPANVSDPIKRSGMEAALEYMGLEPNTLLKDIKIDKVFIGSCTNARIEDLRAAAAVVDGHRIAPTVKRAMVVPGSGLVKKQAEAEGLDKIFEAAGFEWREAGCSMCLGMNPDILGPKERCASTSNRNFEGRQGRLSRTHLMSPAMAAAAGIMGHFVDIREFEFKESSAPKVEVRHDTDSSTLEEANYGHAKEEPPSAELSDVAKQEKVNDIPVSNSSTQSPGSAPSADAGLQPFLQLQGIAAPLDKANVDTDAIIPKQFLKTIKRTGLKEGLFYDWRFAKHADGKVTGTDFVLNREPYRKATTLVVTGPNFGCGSSREHAPWALKDFGIMCIIAPSFGDIFYNNSFKNGLLPIRLPQDVIKEKLYPIASAGGELVIDLPAQQIADGEGHILVTQFDVEPSRKHCLVNGLDDIGLTLQKERFIADYEAMRRRDFSFLEGGSKLLPRISHSKPTSMPQAANDW.

[4Fe-4S] cluster is bound by residues Cys-357, Cys-418, and Cys-421. Positions 482–493 (SAPKVEVRHDTD) are enriched in basic and acidic residues. 2 disordered regions span residues 482 to 518 (SAPK…SDVA) and 525 to 544 (DIPV…SADA). Residues 527 to 538 (PVSNSSTQSPGS) show a composition bias toward polar residues.

It belongs to the aconitase/IPM isomerase family. As to quaternary structure, monomer. The cofactor is [4Fe-4S] cluster.

The enzyme catalyses (2R,3S)-3-isopropylmalate = (2S)-2-isopropylmalate. The protein operates within amino-acid biosynthesis; L-leucine biosynthesis; L-leucine from 3-methyl-2-oxobutanoate: step 2/4. Catalyzes the isomerization between 2-isopropylmalate and 3-isopropylmalate, via the formation of 2-isopropylmaleate. The polypeptide is 3-isopropylmalate dehydratase (LEU1) (Eremothecium gossypii (strain ATCC 10895 / CBS 109.51 / FGSC 9923 / NRRL Y-1056) (Yeast)).